The following is a 144-amino-acid chain: Large ribosomal subunit protein uL16 (144 aa).

Residues 1–14 (MLMPKRVKYRKPHR) are compositionally biased toward basic residues. The disordered stretch occupies residues 1–25 (MLMPKRVKYRKPHRPGTQGKATRGN).

Belongs to the universal ribosomal protein uL16 family. In terms of assembly, part of the 50S ribosomal subunit.

Binds 23S rRNA and is also seen to make contacts with the A and possibly P site tRNAs. In Moorella thermoacetica (strain ATCC 39073 / JCM 9320), this protein is Large ribosomal subunit protein uL16.